The following is a 342-amino-acid chain: Ribosomal RNA small subunit methyltransferase C (342 aa).

This sequence belongs to the methyltransferase superfamily. RsmC family. Monomer.

Its subcellular location is the cytoplasm. The enzyme catalyses guanosine(1207) in 16S rRNA + S-adenosyl-L-methionine = N(2)-methylguanosine(1207) in 16S rRNA + S-adenosyl-L-homocysteine + H(+). In terms of biological role, specifically methylates the guanine in position 1207 of 16S rRNA in the 30S particle. This is Ribosomal RNA small subunit methyltransferase C from Klebsiella pneumoniae subsp. pneumoniae (strain ATCC 700721 / MGH 78578).